We begin with the raw amino-acid sequence, 213 residues long: Holliday junction branch migration complex subunit RuvA (213 aa).

A domain I region spans residues 1 to 64 (MIASVTGEVA…DEAPLLFGFA (64 aa)). The segment at 65–143 (QGDEKEIFTV…LPEPPVQQAN (79 aa)) is domain II. The interval 144–152 (QPQVPVWRD) is flexible linker. The interval 152–213 (DQVVDALTGL…GTTHAPTGRR (62 aa)) is domain III.

Belongs to the RuvA family. Homotetramer. Forms an RuvA(8)-RuvB(12)-Holliday junction (HJ) complex. HJ DNA is sandwiched between 2 RuvA tetramers; dsDNA enters through RuvA and exits via RuvB. An RuvB hexamer assembles on each DNA strand where it exits the tetramer. Each RuvB hexamer is contacted by two RuvA subunits (via domain III) on 2 adjacent RuvB subunits; this complex drives branch migration. In the full resolvosome a probable DNA-RuvA(4)-RuvB(12)-RuvC(2) complex forms which resolves the HJ.

The protein resides in the cytoplasm. Its function is as follows. The RuvA-RuvB-RuvC complex processes Holliday junction (HJ) DNA during genetic recombination and DNA repair, while the RuvA-RuvB complex plays an important role in the rescue of blocked DNA replication forks via replication fork reversal (RFR). RuvA specifically binds to HJ cruciform DNA, conferring on it an open structure. The RuvB hexamer acts as an ATP-dependent pump, pulling dsDNA into and through the RuvAB complex. HJ branch migration allows RuvC to scan DNA until it finds its consensus sequence, where it cleaves and resolves the cruciform DNA. The protein is Holliday junction branch migration complex subunit RuvA of Kocuria rhizophila (strain ATCC 9341 / DSM 348 / NBRC 103217 / DC2201).